A 342-amino-acid chain; its full sequence is Platelet-activating factor receptor (342 aa).

Over 1-16 the chain is Extracellular; the sequence is MEPNNSFRVDSEFRYT. An N-linked (GlcNAc...) asparagine glycan is attached at Asn-4. A helical membrane pass occupies residues 17-38; it reads LFPIFYSIVFVLGVIANSYVLW. Topologically, residues 39 to 54 are cytoplasmic; sequence VFARLYPSKKFNEIKI. Residues 55–74 traverse the membrane as a helical segment; sequence FMVNLTMADLLFLVTLPLWI. At 75-91 the chain is on the extracellular side; that stretch reads VYYYNQGDWILPKFLCN. Residues Cys-90 and Cys-173 are joined by a disulfide bond. A helical membrane pass occupies residues 92–113; the sequence is LAGCFFFINTYCSVAFLAVITY. Over 114 to 133 the chain is Cytoplasmic; that stretch reads NRFQAVTRPIKTAQATTRKR. A helical membrane pass occupies residues 134–155; that stretch reads GILLSLIIWVSIVGAASYFFVL. At 156 to 184 the chain is on the extracellular side; it reads DSTNREPNKTGSANITRCFEHYEKGSIPV. N-linked (GlcNAc...) asparagine glycosylation is found at Asn-163 and Asn-169. A helical membrane pass occupies residues 185–205; it reads LTIHIFLVFSFFLVFLIILFC. Residues 206 to 233 are Cytoplasmic-facing; it reads NLVIIRTLLTQQVQIQRNAEVKRRALWM. The helical transmembrane segment at 234 to 254 threads the bilayer; it reads VCTVLAVFIICFVPHHLVQLP. The Extracellular segment spans residues 255–276; sequence WTLAELGFQDTDFHQAINDAHQ. The helical transmembrane segment at 277 to 296 threads the bilayer; the sequence is VTLCLLSTNCVLDPIIYCFL. The Cytoplasmic portion of the chain corresponds to 297-342; the sequence is TKKFRKHLTEKLYSMRESRKCSRATSETGTEVVMQLKDVPVKSLKY.

The protein belongs to the G-protein coupled receptor 1 family. In terms of assembly, interacts with ARRB1. Found in oviductal epithelial and stroma cells. Levels in the oviduct are raised at days 2-4 of both pregnancy and of the estrus cycle. In the endometrium, localization is predominantly to the apical borders of glandular and luminal epithelial cells. Expressed at lower levels in endometrial stromal cells. Levels in the endometrium are increased at day 20 of pregnancy (at protein level).

It localises to the cell membrane. Functionally, receptor for platelet activating factor, a chemotactic phospholipid mediator that possesses potent inflammatory, smooth-muscle contractile and hypotensive activity. Seems to mediate its action via a G protein that activates a phosphatidylinositol-calcium second messenger system. May be involved in the morphological and physical modifications of the oviduct and uterus during the estrus cycle and early pregnancy. This is Platelet-activating factor receptor from Bos taurus (Bovine).